The following is a 122-amino-acid chain: Urease subunit beta (122 aa).

Positions 102–122 (DGGTAVAGEPRPGIAAERDHQ) are disordered.

The protein belongs to the urease beta subunit family. Heterotrimer of UreA (gamma), UreB (beta) and UreC (alpha) subunits. Three heterotrimers associate to form the active enzyme.

The protein localises to the cytoplasm. The catalysed reaction is urea + 2 H2O + H(+) = hydrogencarbonate + 2 NH4(+). It participates in nitrogen metabolism; urea degradation; CO(2) and NH(3) from urea (urease route): step 1/1. This Paenarthrobacter aurescens (strain TC1) protein is Urease subunit beta.